Consider the following 333-residue polypeptide: Serine/threonine-protein phosphatase 4 catalytic subunit 1 (333 aa).

A disordered region spans residues 1–28; it reads MALACTDSANSTFSRVDSPTSGPSDQLT. The span at 7–27 shows a compositional bias: polar residues; sequence DSANSTFSRVDSPTSGPSDQL. 4 residues coordinate Mn(2+): Asp79, His81, Asp107, and Asn139. His140 serves as the catalytic Proton donor. 2 residues coordinate Mn(2+): His189 and His264. Leucine methyl ester is present on Leu333.

This sequence belongs to the PPP phosphatase family. PP-4 (PP-X) subfamily. In terms of assembly, serine/threonine-protein phosphatase 4 (PP4) occurs in different assemblies of the catalytic and one or more regulatory subunits. The regulatory subunits are likely to be ppfr-1, ppfr-2, ppfr-4 and smk-1. Interacts with mei-1. It depends on Mn(2+) as a cofactor. In terms of processing, methylation at the C-terminal Leu-333 is critical for interactions with regulatory subunits.

It localises to the cytoplasm. The protein localises to the cytoskeleton. Its subcellular location is the microtubule organizing center. The protein resides in the centrosome. The catalysed reaction is O-phospho-L-seryl-[protein] + H2O = L-seryl-[protein] + phosphate. It catalyses the reaction O-phospho-L-threonyl-[protein] + H2O = L-threonyl-[protein] + phosphate. Its function is as follows. Protein phosphatase which plays an essential role in meiosis and in early embryonic mitosis. During spermatocyte meiosis and the first embryonic mitosis, regulates centrosome maturation, and thus spindle formation, by recruiting some of the components of the pericentriolar material (PCM). During oocyte meiosis I, regulates meiotic chromosome dynamics including synapsis-independent chromosome pairing, restriction of synapsis to homologous chromosomes, programmed DNA double-strand break initiation and crossover formation resulting in chiasma formation. During oocyte meiosis II and probably together with regulatory subunit ppfr-1, may regulate microtubule severing by dephosphorylating and activating mei-1, a component of the katanin microtubule severing complex. The chain is Serine/threonine-protein phosphatase 4 catalytic subunit 1 from Caenorhabditis elegans.